A 275-amino-acid polypeptide reads, in one-letter code: 4-hydroxy-3-methylbut-2-enyl diphosphate reductase (275 aa).

Residue cysteine 12 coordinates [4Fe-4S] cluster. 2 residues coordinate (2E)-4-hydroxy-3-methylbut-2-enyl diphosphate: histidine 36 and histidine 70. Positions 36 and 70 each coordinate dimethylallyl diphosphate. Isopentenyl diphosphate contacts are provided by histidine 36 and histidine 70. Cysteine 92 contacts [4Fe-4S] cluster. Histidine 120 contributes to the (2E)-4-hydroxy-3-methylbut-2-enyl diphosphate binding site. Histidine 120 provides a ligand contact to dimethylallyl diphosphate. Histidine 120 contacts isopentenyl diphosphate. The active-site Proton donor is the glutamate 122. Residue threonine 157 coordinates (2E)-4-hydroxy-3-methylbut-2-enyl diphosphate. Cysteine 185 contacts [4Fe-4S] cluster. The (2E)-4-hydroxy-3-methylbut-2-enyl diphosphate site is built by serine 213, serine 214, asparagine 215, and serine 257. Residues serine 213, serine 214, asparagine 215, and serine 257 each contribute to the dimethylallyl diphosphate site. Isopentenyl diphosphate is bound by residues serine 213, serine 214, asparagine 215, and serine 257.

Belongs to the IspH family. [4Fe-4S] cluster is required as a cofactor.

It carries out the reaction isopentenyl diphosphate + 2 oxidized [2Fe-2S]-[ferredoxin] + H2O = (2E)-4-hydroxy-3-methylbut-2-enyl diphosphate + 2 reduced [2Fe-2S]-[ferredoxin] + 2 H(+). The enzyme catalyses dimethylallyl diphosphate + 2 oxidized [2Fe-2S]-[ferredoxin] + H2O = (2E)-4-hydroxy-3-methylbut-2-enyl diphosphate + 2 reduced [2Fe-2S]-[ferredoxin] + 2 H(+). It participates in isoprenoid biosynthesis; dimethylallyl diphosphate biosynthesis; dimethylallyl diphosphate from (2E)-4-hydroxy-3-methylbutenyl diphosphate: step 1/1. It functions in the pathway isoprenoid biosynthesis; isopentenyl diphosphate biosynthesis via DXP pathway; isopentenyl diphosphate from 1-deoxy-D-xylulose 5-phosphate: step 6/6. Catalyzes the conversion of 1-hydroxy-2-methyl-2-(E)-butenyl 4-diphosphate (HMBPP) into a mixture of isopentenyl diphosphate (IPP) and dimethylallyl diphosphate (DMAPP). Acts in the terminal step of the DOXP/MEP pathway for isoprenoid precursor biosynthesis. This is 4-hydroxy-3-methylbut-2-enyl diphosphate reductase from Nitratiruptor sp. (strain SB155-2).